We begin with the raw amino-acid sequence, 200 residues long: UPF0637 protein LCK_01372 (200 aa).

The protein belongs to the UPF0637 family.

This Leuconostoc citreum (strain KM20) protein is UPF0637 protein LCK_01372.